A 507-amino-acid polypeptide reads, in one-letter code: Rhomboid protease GluP (507 aa).

Transmembrane regions (helical) follow at residues 179–199 (FTYL…INGG), 229–249 (IVLH…WSVG), 261–281 (FLLI…VFSP), 283–303 (PSAG…YVAL), and 312–332 (TIGT…FAVS). The Nucleophile role is filled by S288. H339 (charge relay system) is an active-site residue. 2 consecutive transmembrane segments (helical) span residues 340-360 (IGGL…KAGA) and 365-385 (LLSA…GLHS). 2 TPR repeats span residues 424 to 457 (ADLL…EPKD) and 458 to 491 (HASY…KPKE).

The protein belongs to the peptidase S54 family.

Its subcellular location is the cell membrane. The catalysed reaction is Cleaves type-1 transmembrane domains using a catalytic dyad composed of serine and histidine that are contributed by different transmembrane domains.. With respect to regulation, inhibited by dichloroisocoumarin (DCI) and N-p-tosyl-L-phenylalanine chloromethyl ketone (TPCK), but not by other serine protease inhibitors such as sulfonyl fluoride PMSF and 4-(2-aminoethyl)benzenesulfonyl fluoride (AEBSF). Functionally, rhomboid-type serine protease that catalyzes intramembrane proteolysis. Important for normal cell division and sporulation. May act as a glucose exporter. This is Rhomboid protease GluP (gluP) from Bacillus subtilis (strain 168).